The sequence spans 434 residues: Protein phosphatase 2C 56 (434 aa).

A PPM-type phosphatase domain is found at 128–422; sequence LYGFTSICGR…DNISVVVVDL (295 aa). Positions 177, 261, 262, 347, and 413 each coordinate Mg(2+). The Nuclear localization signal motif lies at 423–427; sequence KPRRK.

This sequence belongs to the PP2C family. Interacts with SPK1, ATHB-6, CIPK15/PKS3, GPX3, SRK2E/OST1, SRK2D, SRK2I, SCAR1, SCAR2, SCAR3 and SCARL. Binds to the PA released by the phospholipase D alpha 1 (PLDALPHA1) in response to ABA during the stomatal closure regulation. Interacts with ABA-bounded PYR1, PYL1, PYL2, PYL3, PYL4, PYL5, PYL6, PYL7, PYL8, PYL9, PYL10, and with free PYL2, PYL3, PYL4 and PYL13. Binds to RPL12B, CPK21 and CPK23. Binds to MAPKKK18. Interacts with KIN10. Interacts with phosphorylated PYL8/RCAR3. Mg(2+) serves as cofactor. Requires Mn(2+) as cofactor. Expressed in seeds and seedlings. In roots, confined to lateral root caps and columella cells.

The protein localises to the nucleus. It localises to the cytoplasm. Its subcellular location is the cell membrane. It carries out the reaction O-phospho-L-seryl-[protein] + H2O = L-seryl-[protein] + phosphate. The catalysed reaction is O-phospho-L-threonyl-[protein] + H2O = L-threonyl-[protein] + phosphate. Phosphatase activity repressed by oxidized GPX3 and phosphatidic acid (PA). PA is produced by PLD alpha 1 in response to ABA. Repressed by PYR/PYL/RCAR ABA receptors in an ABA-dependent manner. Its function is as follows. Key component and repressor of the abscisic acid (ABA) signaling pathway that regulates numerous ABA responses, such as stomatal closure, osmotic water permeability of the plasma membrane (Pos), drought-induced resistance and rhizogenesis, response to glucose, high light stress, seed germination and inhibition of vegetative growth. During the stomatal closure regulation, modulates the inward calcium-channel permeability as well as the actin reorganization in guard cells in response to ABA. Involved in the resistance to the bacterial pathogen Pseudomonas syringae pv. tomato. Controls negatively fibrillin expression that is involved in mediating ABA-induced photoprotection. May be involved in ABA content regulation. Plays a role in the Pro accumulation in response to reduced water availability (low water potential). Required for the ABA negative regulation of the ethylene-induced hyponastic growth. Involved in acquired thermotolerance of root growth and seedling survival. Activates/represses SRK2E/OST1 in response to ABA-dependent stimuli, especially in stomata closure regulation involving SLAC1. Represses MAPKKK18 activity and promotes MAPKKK18 degradation by the proteasome pathway upon abscisic acid (ABA) treatment. Represses KIN10 activity by the specific dephosphorylation of its T-loop Thr-198, leading to a poststress inactivation of SnRK1 signaling. Restricts MAPKKK20 activity by dephosphorylation. The protein is Protein phosphatase 2C 56 of Arabidopsis thaliana (Mouse-ear cress).